Here is a 395-residue protein sequence, read N- to C-terminus: DNA primase small subunit PriS (395 aa).

Catalysis depends on residues D95, D97, and D302.

The protein belongs to the eukaryotic-type primase small subunit family. In terms of assembly, heterodimer of a small subunit (PriS) and a large subunit (PriL). The cofactor is Mg(2+). Mn(2+) serves as cofactor.

Its function is as follows. Catalytic subunit of DNA primase, an RNA polymerase that catalyzes the synthesis of short RNA molecules used as primers for DNA polymerase during DNA replication. The small subunit contains the primase catalytic core and has DNA synthesis activity on its own. Binding to the large subunit stabilizes and modulates the activity, increasing the rate of DNA synthesis while decreasing the length of the DNA fragments, and conferring RNA synthesis capability. The DNA polymerase activity may enable DNA primase to also catalyze primer extension after primer synthesis. May also play a role in DNA repair. The protein is DNA primase small subunit PriS of Methanothrix thermoacetophila (strain DSM 6194 / JCM 14653 / NBRC 101360 / PT) (Methanosaeta thermophila).